The following is a 466-amino-acid chain: Ras-GEF domain-containing family member 1C (466 aa).

2 disordered regions span residues 1 to 35 and 443 to 466; these read MPRT…PLLD and SESP…LGKT. One can recognise an N-terminal Ras-GEF domain in the interval 34 to 164; that stretch reads LDGAPSSASL…LLQTLHQKLA (131 aa). In terms of domain architecture, Ras-GEF spans 200-446; the sequence is DPYTLAQQLT…YLASYESESP (247 aa).

In terms of biological role, guanine nucleotide exchange factor (GEF). The protein is Ras-GEF domain-containing family member 1C (Rasgef1c) of Mus musculus (Mouse).